The primary structure comprises 408 residues: E3 ubiquitin-protein ligase At1g12760 (408 aa).

Residues 1 to 52 (MSTETTTGNSSLIPASSSSSSSDAIDPAPLLFNGDDNEGNNGGGGGERRSVR) are disordered. Low complexity predominate over residues 10-34 (SSLIPASSSSSSSDAIDPAPLLFNG). The next 2 membrane-spanning stretches (helical) occupy residues 100–120 (VVVLDIVWNLAFVSVATAILV) and 133–153 (VWLLGYALQCVLHMVCVCVEY). Positions 160-195 (RTNRTTTTTPPRSRSSSSSSSSSSLEEEALGSRRNS) are disordered. Positions 163–183 (RTTTTTPPRSRSSSSSSSSSS) are enriched in low complexity. 3 helical membrane-spanning segments follow: residues 219 to 239 (ANTMFSFIWWIIGFYWVSAGG), 254 to 274 (IVFLGFDVFFVVFCVALACVI), and 275 to 295 (GIAVCCCLPCIIAVLYAVADQ). Residues 353-394 (CCICLSAYEDGTELRELPCGHHFHCSCVDKWLYINATCPLCK) form an RING-type; atypical zinc finger.

The protein localises to the membrane. It catalyses the reaction S-ubiquitinyl-[E2 ubiquitin-conjugating enzyme]-L-cysteine + [acceptor protein]-L-lysine = [E2 ubiquitin-conjugating enzyme]-L-cysteine + N(6)-ubiquitinyl-[acceptor protein]-L-lysine.. The protein operates within protein modification; protein ubiquitination. Functionally, mediates E2-dependent protein ubiquitination in vitro. This Arabidopsis thaliana (Mouse-ear cress) protein is E3 ubiquitin-protein ligase At1g12760.